The following is a 714-amino-acid chain: ABC transporter B family member 28 (714 aa).

The next 5 membrane-spanning stretches (helical) occupy residues 109–129 (LSVCLLTLLGCSTCTLSMPVF), 161–181 (IFTIAFVTNMTAIWENVMAIL), 240–260 (ICILFTLSPQLAPVLGLLMLA), 340–360 (VAVYISLLALYCLGGSKVKTG), and 361–381 (ELAVGTVVSFIGYTFTLTFAV). The ABC transmembrane type-1 domain maps to 109–393 (LSVCLLTLLG…LVNTFGDLRG (285 aa)). The 239-residue stretch at 470–708 (VCLDDVHFAY…KGSYASLVGT (239 aa)) folds into the ABC transporter domain. 505 to 512 (GSSGAGKS) is an ATP binding site.

It belongs to the ABC transporter superfamily. ABCB family. Multidrug resistance exporter (TC 3.A.1.201) subfamily.

It localises to the membrane. The sequence is that of ABC transporter B family member 28 (ABCB28) from Arabidopsis thaliana (Mouse-ear cress).